The chain runs to 148 residues: Transcriptional regulator MraZ (148 aa).

SpoVT-AbrB domains follow at residues 5 to 51 and 80 to 123; these read AAAL…PSPA and ARTE…SEAG.

It belongs to the MraZ family. Forms oligomers.

It localises to the cytoplasm. It is found in the nucleoid. In Dechloromonas aromatica (strain RCB), this protein is Transcriptional regulator MraZ.